Consider the following 310-residue polypeptide: Junctional adhesion molecule C (310 aa).

The first 31 residues, 1–31, serve as a signal peptide directing secretion; the sequence is MALSRRLRLRLCARLPDFFLLLLFRGCVIEA. Residues 32 to 241 lie on the Extracellular side of the membrane; that stretch reads VNLKSSNRNP…GQDMEVYDLN (210 aa). The Ig-like V-type domain maps to 35–127; the sequence is KSSNRNPVVH…VALNDRKEVD (93 aa). 2 disulfides stabilise this stretch: cysteine 53–cysteine 115 and cysteine 160–cysteine 219. N-linked (GlcNAc...) asparagine glycosylation is found at asparagine 104 and asparagine 192. Residues 139–236 enclose the Ig-like C2-type domain; it reads PVAPVCRVPK…AARCEGQDME (98 aa). Residues 242 to 262 traverse the membrane as a helical segment; the sequence is IAGIIGGVLVVLIVLAVITMG. Residues 263-310 lie on the Cytoplasmic side of the membrane; sequence ICCAYRRGCFISSKQDGESYKSPGKHEGVNYIRTSEEGDFRHKSSFVI. S-palmitoyl cysteine attachment occurs at residues cysteine 264 and cysteine 265.

The protein belongs to the immunoglobulin superfamily. As to quaternary structure, interacts with ITGAM. Interacts with GORASP2. In terms of processing, proteolytically cleaved from endothelial cells surface into a soluble form by ADAM10 and ADAM17; the release of soluble JAM3 is increased by pro-inflammatory factors. Post-translationally, S-palmitoylated by ZDHHC7. S-palmitoylation promotes expression at tight junctions.

Its subcellular location is the cell membrane. The protein localises to the cell junction. It localises to the desmosome. The protein resides in the tight junction. It is found in the secreted. Junctional adhesion protein that mediates heterotypic cell-cell interactions with its cognate receptor JAM2 to regulate different cellular processes. Plays a role in homing and mobilization of hematopoietic stem and progenitor cells within the bone marrow. At the surface of bone marrow stromal cells, it contributes to the retention of the hematopoietic stem and progenitor cells expressing JAM3. Plays a central role in leukocytes extravasation by facilitating transmigration through the endothelium. Plays a role in spermatogenesis where JAM2 and JAM3, which are respectively expressed by Sertoli and germ cells, mediate an interaction between both cell types and play an essential role in the anchorage of germ cells onto Sertoli cells and the assembly of cell polarity complexes during spermatid differentiation. Also functions as a counter-receptor for ITGAM, mediating leukocyte-platelet interactions and is involved in the regulation of transepithelial migration of polymorphonuclear neutrophils (PMN). Plays a role in angiogenesis. Plays a role in the regulation of cell migration. During myogenesis, it is involved in myocyte fusion. In terms of biological role, promotes chemotaxis of vascular endothelial cells and stimulates angiogenesis. The chain is Junctional adhesion molecule C (Jam3) from Rattus norvegicus (Rat).